The chain runs to 31 residues: Maltose/maltodextrin import ATP-binding protein MalK (31 aa).

Belongs to the ABC transporter superfamily. Maltooligosaccharide importer (TC 3.A.1.1.1) family. The complex is composed of two ATP-binding proteins (MalK), two transmembrane proteins (MalG and MalK) and a solute-binding protein (MalE).

Its subcellular location is the cell inner membrane. It catalyses the reaction D-maltose(out) + ATP + H2O = D-maltose(in) + ADP + phosphate + H(+). Functionally, part of the ABC transporter complex MalEFGK involved in maltose/maltodextrin import. Responsible for energy coupling to the transport system. The sequence is that of Maltose/maltodextrin import ATP-binding protein MalK from Photorhabdus luminescens (Xenorhabdus luminescens).